The sequence spans 209 residues: Thymidylate kinase (209 aa).

Position 10-17 (10-17 (GLDGAGKS)) interacts with ATP.

Belongs to the thymidylate kinase family.

The enzyme catalyses dTMP + ATP = dTDP + ADP. Functionally, phosphorylation of dTMP to form dTDP in both de novo and salvage pathways of dTTP synthesis. The sequence is that of Thymidylate kinase from Francisella tularensis subsp. holarctica (strain FTNF002-00 / FTA).